The following is a 188-amino-acid chain: Adenylate kinase (188 aa).

G12–T17 is an ATP binding site. The interval S32–V61 is NMP. AMP-binding positions include T33, R38, N59 to V61, G89 to R92, and Q96. The tract at residues G130–D136 is LID. An ATP-binding site is contributed by R131. The AMP site is built by R133 and R144. G172 lines the ATP pocket.

This sequence belongs to the adenylate kinase family. In terms of assembly, monomer.

It is found in the cytoplasm. The enzyme catalyses AMP + ATP = 2 ADP. Its pathway is purine metabolism; AMP biosynthesis via salvage pathway; AMP from ADP: step 1/1. Functionally, catalyzes the reversible transfer of the terminal phosphate group between ATP and AMP. Plays an important role in cellular energy homeostasis and in adenine nucleotide metabolism. This Oenococcus oeni (strain ATCC BAA-331 / PSU-1) protein is Adenylate kinase.